The chain runs to 173 residues: Bifunctional protein PyrR (173 aa).

The short motif at 93 to 105 (VILIDDVLYTGRT) is the PRPP-binding element.

The protein belongs to the purine/pyrimidine phosphoribosyltransferase family. PyrR subfamily. As to quaternary structure, homodimer and homohexamer; in equilibrium.

The enzyme catalyses UMP + diphosphate = 5-phospho-alpha-D-ribose 1-diphosphate + uracil. Its function is as follows. Regulates transcriptional attenuation of the pyrimidine nucleotide (pyr) operon by binding in a uridine-dependent manner to specific sites on pyr mRNA. This disrupts an antiterminator hairpin in the RNA and favors formation of a downstream transcription terminator, leading to a reduced expression of downstream genes. In terms of biological role, also displays a weak uracil phosphoribosyltransferase activity which is not physiologically significant. In Streptococcus pyogenes serotype M49 (strain NZ131), this protein is Bifunctional protein PyrR.